The sequence spans 330 residues: MSDSEKLNLDSIIGRLLEVQGSRPGKNVQLTENEIRGLCLKSREIFLSQPILLELEAPLKICGDIHGQYYDLLRLFEYGGFPPESNYLFLGDYVDRGKQSLETICLLLAYKIKYPENFFLLRGNHECASINRIYGFYDECKRRYNIKLWKTFTDCFNCLPIAAIVDEKIFCCHGGLSPDLQSMEQIRRIMRPTDVPDQGLLCDLLWSDPDKDVQGWGENDRGVSFTFGAEVVAKFLHKHDLDLICRAHQVVEDGYEFFAKRQLVTLFSAPNYCGEFDNAGAMMSVDETLMCSFQILKPADKNKGKYGQFSGLNPGGRPITPPRNSAKAKK.

S2 carries the N-acetylserine modification. Phosphoserine is present on residues S2 and S22. Positions 64, 66, 92, and 124 each coordinate Mn(2+). The Proton donor role is filled by H125. Mn(2+) contacts are provided by H173 and H248. Residue K305 is modified to N6-acetyllysine. A Phosphotyrosine modification is found at Y306. The interval 306–330 is disordered; that stretch reads YGQFSGLNPGGRPITPPRNSAKAKK. T320 is subject to Phosphothreonine. At S325 the chain carries Phosphoserine.

Belongs to the PPP phosphatase family. PP-1 subfamily. In terms of assembly, PP1 comprises a catalytic subunit, PPP1CA, PPP1CB or PPP1CC, which is folded into its native form by inhibitor 2 and glycogen synthetase kinase 3, and then complexed to one or several targeting or regulatory subunits. PPP1R12A, PPP1R12B and PPP1R12C mediate binding to myosin. PPP1R3A (in skeletal muscle), PPP1R3B (in liver), PPP1R3C, PPP1R3D and PPP1R3F (in brain) mediate binding to glycogen. Interacts with PPP1R39. Interacts with BTBD10. Interacts with KCTD20. Interacts with PPP1R9A and PPP1R9B. Part of a complex containing PPP1R15B, PP1 and NCK1/2. Interacts with PHACTR4; which acts as an activator of PP1 activity. Interacts with PPP1R15A and PPP1R15B; the interactions mediate binding to EIF2S1. Interacts with PPP1R7. Interacts with YLPM1. Forms a complex with ILF2, ILF3, YLPM1, KHDRBS1, RBMX and NCOA5. Interacts with NOM1 and PPP1R8. Interacts with PPP1R16B. Interacts with RPSA only in the presence of PPP1R16B. Component of the PNUTS-PP1 phosphatase complex, composed of PPP1R10/PNUTS, TOX4, WDR82, and PPP1CA or PPP1CB or PPP1CC. Interacts with PPP1R10/PNUTS and PPP1R8. Interacts with WDR82 in the presence of PPP1R10/PNUTS. Interacts with TRIM28; the interaction dephosphorylates TRIM28 on 'Ser-824' and forms a complex at the p21 promoter site. Interacts with isoform 1 and isoform 4 of NEK2. Interacts with FER; this promotes phosphorylation at Thr-320. Interacts with DAB2; the interaction is mutually exclusive with the AXIN1:PPP1CA interaction. Interacts with FOXP3. Interacts with CENPA. Interacts with ATG16L1. Found in a complex with PPP1CA, PPP1CC, SHC1 and PEAK1. Interacts with tensin TNS1. Interacts with SAXO4, PPP1R21, PPP1R26, PPP1R27, PPP1R35, PPP1R36, PPP1R37, SH3RF2, ELFN1 and ELFN2. Interacts with TPRN; the interaction results in inhibition of PPC1A phosphatase activity. Interacts with SKA1 (via C-terminus); the interaction is direct and required for the recruitment of PP1 to the kinetochore. Interacts with the KNL1 complex subunit KNL1; the interaction is direct and mutually exclusive with KNL1 binding to microtubules. Component of the SHOC2-MRAS-PP1c (SMP) complex consisting of SHOC2, GTP-bound M-Ras/MRAS and the catalytic subunit of protein phosphatase 1 (either PPP1CA, PPP1CB or PPP1CC). SHOC2 and PP1c preferably bind M-Ras/MRAS, but they also bind K-Ras/KRAS, N-Ras/NRAS and H-Ras/HRAS; these interactions are GTP-dependent and both SHOC2 and PP1c are required to form a stable complex. Interacts with SHOC2 in the absence of Ras GTPases. (Microbial infection) Interacts with HHV-1 ICP34.5. As to quaternary structure, (Microbial infection) Interacts with Venezuelan equine encephalitis virus (VEEV) capsid protein; this interaction dephosphorylates the capsid protein, which increases its ability to bind to the viral genome. The cofactor is Fe cation. It depends on Mn(2+) as a cofactor. In terms of processing, phosphorylated. Dephosphorylated at Thr-320 in the presence of ionizing radiation.

Its subcellular location is the cytoplasm. The protein localises to the nucleus. The protein resides in the nucleoplasm. It is found in the nucleolus. The catalysed reaction is O-phospho-L-seryl-[protein] + H2O = L-seryl-[protein] + phosphate. It carries out the reaction O-phospho-L-threonyl-[protein] + H2O = L-threonyl-[protein] + phosphate. Its activity is regulated as follows. The phosphatase activity of the PPP1R15A-PP1 complex toward EIF2S1 is specifically inhibited by Salubrinal, a drug that protects cells from endoplasmic reticulum stress. Functionally, protein phosphatase that associates with over 200 regulatory proteins to form highly specific holoenzymes which dephosphorylate hundreds of biological targets. Protein phosphatase 1 (PP1) is essential for cell division, transcription elongation, and participates in the regulation of glycogen metabolism, muscle contractility and protein synthesis. Involved in regulation of ionic conductances and long-term synaptic plasticity. May play an important role in dephosphorylating substrates such as the postsynaptic density-associated Ca(2+)/calmodulin dependent protein kinase II. Catalytic component of the PNUTS-PP1 protein phosphatase complex, a protein phosphatase 1 (PP1) complex that promotes RNA polymerase II transcription pause-release, allowing transcription elongation: the PNUTS-PP1 complex mediates the release of RNA polymerase II from promoter-proximal region of genes by catalyzing dephosphorylation of proteins involved in transcription, such as AFF4, CDK9, MEPCE, INTS12, NCBP1, POLR2M/GDOWN1 and SUPT6H. The PNUTS-PP1 complex also regulates transcription termination by mediating dephosphorylation of SUPT5H in termination zones downstream of poly(A) sites, thereby promoting deceleration of RNA polymerase II transcription. PNUTS-PP1 complex is also involved in the response to replication stress by mediating dephosphorylation of POLR2A at 'Ser-5' of the CTD, promoting RNA polymerase II degradation. PNUTS-PP1 also plays a role in the control of chromatin structure and cell cycle progression during the transition from mitosis into interphase. Regulates NEK2 function in terms of kinase activity and centrosome number and splitting, both in the presence and absence of radiation-induced DNA damage. Regulator of neural tube and optic fissure closure, and enteric neural crest cell (ENCCs) migration during development. In balance with CSNK1D and CSNK1E, determines the circadian period length, through the regulation of the speed and rhythmicity of PER1 and PER2 phosphorylation. May dephosphorylate CSNK1D and CSNK1E. Dephosphorylates the 'Ser-418' residue of FOXP3 in regulatory T-cells (Treg) from patients with rheumatoid arthritis, thereby inactivating FOXP3 and rendering Treg cells functionally defective. Dephosphorylates CENPA. Dephosphorylates the 'Ser-139' residue of ATG16L1 causing dissociation of ATG12-ATG5-ATG16L1 complex, thereby inhibiting autophagy. Together with PPP1CC (PP1-gamma subunit), dephosphorylates IFIH1/MDA5 and RIG-I leading to their activation and a functional innate immune response. Core component of the SHOC2-MRAS-PP1c (SMP) holophosphatase complex that regulates the MAPK pathway activation. The SMP complex specifically dephosphorylates the inhibitory phosphorylation at 'Ser-259' of RAF1 kinase, 'Ser-365' of BRAF kinase and 'Ser-214' of ARAF kinase, stimulating their kinase activities. The SMP complex enhances the dephosphorylation activity and substrate specificity of PP1c. (Microbial infection) Necessary for alphaviruses replication. This chain is Serine/threonine-protein phosphatase PP1-alpha catalytic subunit (PPP1CA), found in Homo sapiens (Human).